The following is a 160-amino-acid chain: Nucleotide-binding protein Tola_0795 (160 aa).

This sequence belongs to the YajQ family.

Nucleotide-binding protein. This Tolumonas auensis (strain DSM 9187 / NBRC 110442 / TA 4) protein is Nucleotide-binding protein Tola_0795.